Here is a 1011-residue protein sequence, read N- to C-terminus: Protein FAM83B (1011 aa).

Residues 1–283 (METSSMLSSL…RTLYARSCVP (283 aa)) form a DUF1669 region. Residues 1-284 (METSSMLSSL…TLYARSCVPS (284 aa)) form a required for interaction with RAF1 and for the function region. Phosphoserine is present on residues S334, S422, S424, S466, and S543. Residues 555–585 (EVNSCTTGSSNSTIIGSQGSETPKEVPDTPT) are disordered. Low complexity predominate over residues 557 to 574 (NSCTTGSSNSTIIGSQGS). Residue S664 is modified to Phosphoserine. 2 disordered regions span residues 691–738 (NRVR…TKSV) and 750–769 (ESNKELASKKEVKGSPSFLK). Basic and acidic residues predominate over residues 694–705 (RQPEKPKEDLLK). Composition is skewed to polar residues over residues 706–715 (SSKSMHNVTH) and 727–738 (RNSPSGTTTKSV). Basic and acidic residues predominate over residues 750-762 (ESNKELASKKEVK). Position 782 is a phosphothreonine (T782). Residue S802 is modified to Phosphoserine. A disordered region spans residues 807–928 (LVSEGEENQK…TSSELLRSHS (122 aa)). A compositionally biased stretch (basic and acidic residues) spans 813–828 (ENQKPKKSDTKVDSSP). A phosphoserine mark is found at S852, S869, and S915. Low complexity predominate over residues 913–923 (TSSPRPTSSEL).

This sequence belongs to the FAM83 family. As to quaternary structure, interacts with EGFR; positively regulates EGFR inducing its autophosphorylation in absence of stimulation by EGF. Interacts with RAF1; displaces 14-3-3 proteins from RAF1 and activates RAF1 within the RAS/MAPK signaling cascade. Interacts with AKT1, PIK3CA and PIK3R1; activates the PI3K/AKT signaling cascade. Directly interacts (via DUF1669) with casein kinase isoforms CSNK1A1, CSNK1A1L, CSNK1D and CSNK1E. Post-translationally, phosphorylated in vitro by CSNK1A1.

The protein resides in the cytoplasm. It localises to the membrane. Its function is as follows. Probable proto-oncogene that functions in the epidermal growth factor receptor/EGFR signaling pathway. Activates both the EGFR itself and downstream RAS/MAPK and PI3K/AKT/TOR signaling cascades. The polypeptide is Protein FAM83B (Homo sapiens (Human)).